Reading from the N-terminus, the 1397-residue chain is DNA-directed RNA polymerase subunit beta' (1397 aa).

Cysteine 71, cysteine 73, cysteine 86, and cysteine 89 together coordinate Zn(2+). Mg(2+) contacts are provided by aspartate 462, aspartate 464, and aspartate 466. Zn(2+) is bound by residues cysteine 811, cysteine 885, cysteine 892, and cysteine 895. The disordered stretch occupies residues 1368-1397 (QNRDDKILEDQGGATPTASTEIKEPAEGAA). The span at 1388 to 1397 (EIKEPAEGAA) shows a compositional bias: basic and acidic residues.

Belongs to the RNA polymerase beta' chain family. The RNAP catalytic core consists of 2 alpha, 1 beta, 1 beta' and 1 omega subunit. When a sigma factor is associated with the core the holoenzyme is formed, which can initiate transcription. Requires Mg(2+) as cofactor. Zn(2+) serves as cofactor.

It catalyses the reaction RNA(n) + a ribonucleoside 5'-triphosphate = RNA(n+1) + diphosphate. Its function is as follows. DNA-dependent RNA polymerase catalyzes the transcription of DNA into RNA using the four ribonucleoside triphosphates as substrates. The chain is DNA-directed RNA polymerase subunit beta' from Parvibaculum lavamentivorans (strain DS-1 / DSM 13023 / NCIMB 13966).